We begin with the raw amino-acid sequence, 537 residues long: Bifunctional purine biosynthesis protein PurH (537 aa).

Positions I8 to T158 constitute an MGS-like domain.

The protein belongs to the PurH family.

The catalysed reaction is (6R)-10-formyltetrahydrofolate + 5-amino-1-(5-phospho-beta-D-ribosyl)imidazole-4-carboxamide = 5-formamido-1-(5-phospho-D-ribosyl)imidazole-4-carboxamide + (6S)-5,6,7,8-tetrahydrofolate. It catalyses the reaction IMP + H2O = 5-formamido-1-(5-phospho-D-ribosyl)imidazole-4-carboxamide. It functions in the pathway purine metabolism; IMP biosynthesis via de novo pathway; 5-formamido-1-(5-phospho-D-ribosyl)imidazole-4-carboxamide from 5-amino-1-(5-phospho-D-ribosyl)imidazole-4-carboxamide (10-formyl THF route): step 1/1. It participates in purine metabolism; IMP biosynthesis via de novo pathway; IMP from 5-formamido-1-(5-phospho-D-ribosyl)imidazole-4-carboxamide: step 1/1. This chain is Bifunctional purine biosynthesis protein PurH, found in Chelativorans sp. (strain BNC1).